Consider the following 204-residue polypeptide: Large ribosomal subunit protein eL15y (204 aa).

The segment at 162 to 204 (RGLTSEGKKNRGLRGKGHNNHKNRPSRRATWKKNNSISLRRYR) is disordered. Positions 171–192 (NRGLRGKGHNNHKNRPSRRATW) are enriched in basic residues. Polar residues predominate over residues 193-204 (KKNNSISLRRYR).

The protein belongs to the eukaryotic ribosomal protein eL15 family.

The polypeptide is Large ribosomal subunit protein eL15y (RPL15B) (Arabidopsis thaliana (Mouse-ear cress)).